A 267-amino-acid polypeptide reads, in one-letter code: ATP synthase subunit a (267 aa).

Helical transmembrane passes span 38-58 (WHID…FVFY), 98-118 (IAPL…MDLI), 145-165 (NITF…SIKI), 208-228 (LFGN…MPWW), and 238-258 (AIFH…LTIV).

This sequence belongs to the ATPase A chain family. As to quaternary structure, F-type ATPases have 2 components, CF(1) - the catalytic core - and CF(0) - the membrane proton channel. CF(1) has five subunits: alpha(3), beta(3), gamma(1), delta(1), epsilon(1). CF(0) has three main subunits: a(1), b(2) and c(9-12). The alpha and beta chains form an alternating ring which encloses part of the gamma chain. CF(1) is attached to CF(0) by a central stalk formed by the gamma and epsilon chains, while a peripheral stalk is formed by the delta and b chains.

The protein localises to the cell inner membrane. Functionally, key component of the proton channel; it plays a direct role in the translocation of protons across the membrane. This is ATP synthase subunit a from Psychromonas ingrahamii (strain DSM 17664 / CCUG 51855 / 37).